Here is a 215-residue protein sequence, read N- to C-terminus: Chymomexicain (215 aa).

Intrachain disulfides connect Cys-22/Cys-63, Cys-56/Cys-96, and Cys-154/Cys-201. Residue Cys-25 is part of the active site. Residues His-160 and Asn-176 contribute to the active site.

The protein belongs to the peptidase C1 family.

Cysteine protease. The sequence is that of Chymomexicain from Jacaratia mexicana (Wild papaya).